Consider the following 113-residue polypeptide: U11-theraphotoxin-Hhn1s (113 aa).

An N-terminal signal peptide occupies residues Met-1–Ala-21. Residues Asp-22–Arg-74 constitute a propeptide that is removed on maturation. Residues Glu-61–Asp-83 form a disordered region. Disulfide bonds link Cys-75/Cys-90, Cys-82/Cys-95, and Cys-89/Cys-110.

It belongs to the neurotoxin 14 (magi-1) family. 01 (HNTX-16) subfamily. Expressed by the venom gland.

It localises to the secreted. Functionally, probable ion channel inhibitor. The sequence is that of U11-theraphotoxin-Hhn1s from Cyriopagopus hainanus (Chinese bird spider).